Consider the following 1331-residue polypeptide: DNA replication ATP-dependent helicase/nuclease JHS1 (1331 aa).

The interval 1-98 (MPPRKKPKSS…DMDQQLTEAS (98 aa)) is disordered. Positions 2-8 (PPRKKPK) match the Nuclear localization signal motif. A compositionally biased stretch (polar residues) spans 11 to 31 (ALKSNKQSSANHSSQPSTFGI). The segment covering 40–52 (QNSQSTSNSHTST) has biased composition (low complexity). Polar residues predominate over residues 57–81 (DQQNVNGLASDTAVLTPQNPLGTSN). Residues 82 to 91 (EKPDESKDMD) show a composition bias toward basic and acidic residues. The tract at residues 362-811 (ECALYLWDEW…CKLRTGDRVI (450 aa)) is nuclease activity. [4Fe-4S] cluster-binding residues include Cys422, Cys666, Cys669, and Cys675. The helicase activity stretch occupies residues 812-1331 (LRTEVSHLTV…LNLLPGDLKP (520 aa)). A UvrD-like helicase ATP-binding domain is found at 924-1271 (NNDQRQAILK…VRSREKPRSS (348 aa)). An ATP-binding site is contributed by 945 to 952 (GMPGTGKT).

The protein belongs to the DNA2/NAM7 helicase family. The cofactor is [4Fe-4S] cluster. In terms of tissue distribution, strongly expressed in meristems, including both root and shoot apical meristems (RAM and SAM). Also present in the vasculature and in young floral tissues.

Its subcellular location is the nucleus. It is found in the chromosome. The catalysed reaction is ATP + H2O = ADP + phosphate + H(+). Essential protein required during embryogenesis. Key enzyme involved in DNA replication and damage repair, shoot apical meristem (SAM) maintenance, and development. Involved in Okazaki fragments processing. Possesses different enzymatic activities, such as single-stranded DNA (ssDNA)-dependent ATPase, 5'-3' helicase and endonuclease activities. While the ATPase and endonuclease activities are well-defined and play a key role in Okazaki fragments processing and DSB repair, the 5'-3' DNA helicase activity is atypical: it cannot load onto its tracking strand internally and has an absolute free 5'-end requirement. This chain is DNA replication ATP-dependent helicase/nuclease JHS1, found in Arabidopsis thaliana (Mouse-ear cress).